Here is a 552-residue protein sequence, read N- to C-terminus: Cytochrome P450 monooxyhenase eriI (552 aa).

A helical transmembrane segment spans residues 9 to 26 (FALKASAAVAVLLLAAWV). Residues Asn-50 and Asn-447 are each glycosylated (N-linked (GlcNAc...) asparagine). Heme is bound at residue Cys-495.

Belongs to the cytochrome P450 family. Heme serves as cofactor.

The protein localises to the membrane. The enzyme catalyses (-)-cyatha-3,12-diene + reduced [NADPH--hemoprotein reductase] + O2 = erinacol + oxidized [NADPH--hemoprotein reductase] + H2O + H(+). Its pathway is secondary metabolite biosynthesis. Functionally, cytochrome P450 monooxygenase; part of the gene cluster that mediates the biosynthesis of erinacines, cyathane-xylosides that show unique biological activities, including leishmanicidal activity, stimulating activity for nerve growth-factor synthesis, and agonistic activity toward the kappa opioid receptor. Within the pathway, eriI hydroxylates cyatha-3,12-diene at C-14 of the seven-membered ring to yield erinacol. The first step of the erinacines biosynthesis pathway is catalyzed by the geranylgeranyl diphosphate (GGPP) synthase eriE via conversion of farnesyl pyrophosphate and isopentyl pyrophosphate into geranylgeranyl pyrophosphate (GGPP). GGPP is then substrate of the diterpene cyclase eriG for the production of cyatha-3,12-diene. The cytochrome P450 monooxygenase eriI then hydroxylates cyatha-3,12-diene at C-14 of the seven-membered ring to produce erinacol, which is further hydroxylated at C-15 by the cytochrome P450 monooxygenase eriC to yield cyathadiol. The cytochrome P450 monooxygenase eriA then catalyzes C-11 hydroxylation in the presence of the short chain dehydrogenase/reductase (SDR) eriH, which leads to the production of cyathatriol. The acetyltransferase eriL converts cyathatriol into 11-O-acetyl-cyathatriol. The SDR eriH catalyzes further oxidation of 11-O-acetyl-cyathatriol into 1-O-acetylcyathin A3. Finally, the glycosyl transferase eriJ tranfers xylose from UDP-xylose onto C-14 of 11-O-acetyl-cyathatriol to form eracine Q. EriJ is also able to convert 11-O-acetyl-cyathatriol to eracine Q2 by using UDP-D-glucose as cosubstrate, but at a lower rate. In terms of biological role, cytochrome P450 monooxygenase; part of the gene cluster that mediates the biosynthesis of erinacines, cyathane-xylosides that show unique biological activities, including leishmanicidal activity, stimulating activity for nerve growth-factor synthesis, and agonistic activity toward the kappa opioid receptor. The geranylgeranyl diphosphate (GGPP) synthase eriE catalyzes the first step in erinacines biosynthesis via conversion of farnesyl pyrophosphate and isopentyl pyrophosphate into geranylgeranyl pyrophosphate (GGPP). GGPP is then substrate of the diterpene cyclase eriG for the production of cyatha-3,12-diene. EriG is unable to use geranyl diphosphate (GPP) or farnesyl diphosphate (FPP) as substrates. The cytochrome P450 monooxygenase eriI then hydroxylates cyatha-3,12-diene at C-14 of the seven-membered ring to produce erinacol, which is further hydroxylated at C-15 by the cytochrome P450 monooxygenase eriC to yield cyathadiol. The cytochrome P450 monooxygenase eriA then catalyzes C-11 hydroxylation in the presence of the short chain dehydrogenase/reductase (SDR) eriH, which leads to the production of cyathatriol. The acetyltransferase eriL converts cyathatriol into 11-O-acetyl-cyathatriol. The SDR eriH catalyzes further oxidation of 11-O-acetyl-cyathatriol into 1-O-acetylcyathin A3. Finally, the glycosyl transferase eriJ tranfers xylose from UDP-xylose onto C-14 of 11-O-acetyl-cyathatriol to form eracine Q. EriJ is also able to convert 11-O-acetyl-cyathatriol to eracine Q2 by using UDP-D-glucose as cosubstrate, but at a lower rate. In the absence of eriL and eriJ, the SDR eriH is able to convert cyathatriol to cyathin A3; this is likely a switching mechanism in the biosynthesis of cyathins (C-14 ketogroup)and erinacines (C-14 glycosylated group). The roles of the SDR eriB, the polyprenyl transferase eriF and the dehydrogenase eriK have still to be identified. This Hericium erinaceus (Lion's mane mushroom) protein is Cytochrome P450 monooxyhenase eriI.